Consider the following 343-residue polypeptide: Vacuolar membrane protein Kpol_1003p17 (343 aa).

Residues 45-65 form a disordered region; it reads TTDTSGTSTSSRDVSSGQSTL. Residues 101–121 traverse the membrane as a helical segment; the sequence is FIAVGSIIGGIFGGVLIWWMI. The interval 235–343 is disordered; sequence EVLQQQRQRR…YLDDMLENDN (109 aa). A compositionally biased stretch (polar residues) spans 254–264; it reads ELPSTPPSNFK. The segment covering 269–280 has biased composition (basic and acidic residues); the sequence is KPERSASPERKS. Residues 281-290 show a composition bias toward basic residues; the sequence is RSPIRQHRKN.

It belongs to the PRM5 family.

It is found in the vacuole membrane. This chain is Vacuolar membrane protein Kpol_1003p17, found in Vanderwaltozyma polyspora (strain ATCC 22028 / DSM 70294 / BCRC 21397 / CBS 2163 / NBRC 10782 / NRRL Y-8283 / UCD 57-17) (Kluyveromyces polysporus).